The sequence spans 320 residues: tRNA dimethylallyltransferase (320 aa).

16 to 23 (GPTASGKT) lines the ATP pocket. Residue 18-23 (TASGKT) participates in substrate binding. 3 interaction with substrate tRNA regions span residues 41–44 (DSAL), 165–169 (QRIQR), and 247–252 (RCVGYR).

Belongs to the IPP transferase family. As to quaternary structure, monomer. Mg(2+) serves as cofactor.

The catalysed reaction is adenosine(37) in tRNA + dimethylallyl diphosphate = N(6)-dimethylallyladenosine(37) in tRNA + diphosphate. Its function is as follows. Catalyzes the transfer of a dimethylallyl group onto the adenine at position 37 in tRNAs that read codons beginning with uridine, leading to the formation of N6-(dimethylallyl)adenosine (i(6)A). This Azoarcus sp. (strain BH72) protein is tRNA dimethylallyltransferase.